We begin with the raw amino-acid sequence, 106 residues long: Cell division protein FtsB (106 aa).

The Cytoplasmic segment spans residues 1–3; the sequence is MRL. The chain crosses the membrane as a helical span at residues 4–21; that stretch reads LTLIFVALIALLQYPLWL. Residues 22 to 106 are Periplasmic-facing; it reads GKGSWLRVWD…SPPAALTGAQ (85 aa). Positions 31-73 form a coiled coil; that stretch reads DLNQKIVAQKAVNAELKLRNDTLDAEVRDLKQGNAAIEERARS.

This sequence belongs to the FtsB family. In terms of assembly, part of a complex composed of FtsB, FtsL and FtsQ.

It localises to the cell inner membrane. Essential cell division protein. May link together the upstream cell division proteins, which are predominantly cytoplasmic, with the downstream cell division proteins, which are predominantly periplasmic. The protein is Cell division protein FtsB of Methylobacillus flagellatus (strain ATCC 51484 / DSM 6875 / VKM B-1610 / KT).